The sequence spans 274 residues: MASKSGDGGTVCALEFAVQMSCQSCVDAVHKTLKGVAGVQNVDVQLENQMVLVQTTLPSQEVQALLESTGRQAVLKGMGSSQLQNLGAAVAILEGCGSIQGVVRFLQLSSELCLIEGTIDGLEPGLHGLHVHQYGDLTRDCNSCGDHFNPDGASHGGPQDTDRHRGDLGNVRAEAGGRATFRIEDKQLKVWDVIGRSLVIDEGEDDLGRGGHPLSKITGNSGKRLACGIIARSAGLFQNPKQICSCDGLTIWEERGRPIAGQGRKDSAQPPAHL.

The 64-residue stretch at 11-74 (VCALEFAVQM…LLESTGRQAV (64 aa)) folds into the HMA domain. Positions 22 and 25 each coordinate Cu cation. Residue K76 forms a Glycyl lysine isopeptide (Lys-Gly) (interchain with G-Cter in ubiquitin) linkage. The interval 88–234 (AAVAILEGCG…LACGIIARSA (147 aa)) is superoxide dismutase-like. A disulfide bridge links C141 with C227. Residues H147, H155, H164, and D167 each coordinate Zn(2+). Residues K189, K216, and K241 each participate in a glycyl lysine isopeptide (Lys-Gly) (interchain with G-Cter in ubiquitin) cross-link. Cu cation is bound by residues C244 and C246. At S267 the chain carries Phosphoserine.

The protein in the C-terminal section; belongs to the Cu-Zn superoxide dismutase family. In terms of assembly, homodimer, and heterodimer with SOD1. Interacts with COMMD1. Interacts with XIAP/BIRC4. Interacts with SLC31A1(via C-terminal domain); this interaction is Cu(1+)-mediated. The heterodimer CCS:SOD1 interacts with SLC31A1; this heterotrimer is Cu(1+)-mediated and its maintenance is regulated through SOD1 activation. The cofactor is Cu(2+). It depends on Zn(2+) as a cofactor. Post-translationally, ubiquitinion by XIAP/BIRC4 leads to enhancement of its chaperone activity toward its physiologic target, SOD1, rather than proteasomal degradation. XIAP/BIRC4 preferentially ubiquitinates at Lys-241. As to expression, ubiquitous.

The protein localises to the cytoplasm. Its function is as follows. Delivers copper to copper zinc superoxide dismutase (SOD1). This chain is Copper chaperone for superoxide dismutase, found in Mus musculus (Mouse).